The following is a 100-amino-acid chain: Urease subunit gamma (100 aa).

It belongs to the urease gamma subunit family. In terms of assembly, heterotrimer of UreA (gamma), UreB (beta) and UreC (alpha) subunits. Three heterotrimers associate to form the active enzyme.

Its subcellular location is the cytoplasm. It carries out the reaction urea + 2 H2O + H(+) = hydrogencarbonate + 2 NH4(+). The protein operates within nitrogen metabolism; urea degradation; CO(2) and NH(3) from urea (urease route): step 1/1. The polypeptide is Urease subunit gamma (Streptomyces avermitilis (strain ATCC 31267 / DSM 46492 / JCM 5070 / NBRC 14893 / NCIMB 12804 / NRRL 8165 / MA-4680)).